Here is a 554-residue protein sequence, read N- to C-terminus: Phenylalanine--tRNA ligase beta subunit (554 aa).

One can recognise a B5 domain in the interval 274 to 351 (LTPDSAEITI…INYGYENFNG (78 aa)). Residues Asp-329, Asp-335, and Asp-339 each coordinate Mg(2+).

Belongs to the phenylalanyl-tRNA synthetase beta subunit family. Type 2 subfamily. In terms of assembly, tetramer of two alpha and two beta subunits. Mg(2+) is required as a cofactor.

It is found in the cytoplasm. The catalysed reaction is tRNA(Phe) + L-phenylalanine + ATP = L-phenylalanyl-tRNA(Phe) + AMP + diphosphate + H(+). This chain is Phenylalanine--tRNA ligase beta subunit, found in Methanococcus aeolicus (strain ATCC BAA-1280 / DSM 17508 / OCM 812 / Nankai-3).